A 446-amino-acid chain; its full sequence is tRNA-2-methylthio-N(6)-dimethylallyladenosine synthase (446 aa).

Positions 5-121 constitute an MTTase N-terminal domain; sequence KYLYVETFGC…LPEIVRAAER (117 aa). 6 residues coordinate [4Fe-4S] cluster: Cys-14, Cys-50, Cys-84, Cys-159, Cys-163, and Cys-166. Positions 145–375 constitute a Radical SAM core domain; it reads GEGGVTRFVT…QTLQQQMKRE (231 aa). The 63-residue stretch at 378–440 folds into the TRAM domain; sequence ISFVGTRQLV…QNSLLGEIVT (63 aa).

This sequence belongs to the methylthiotransferase family. MiaB subfamily. Monomer. It depends on [4Fe-4S] cluster as a cofactor.

It is found in the cytoplasm. It carries out the reaction N(6)-dimethylallyladenosine(37) in tRNA + (sulfur carrier)-SH + AH2 + 2 S-adenosyl-L-methionine = 2-methylsulfanyl-N(6)-dimethylallyladenosine(37) in tRNA + (sulfur carrier)-H + 5'-deoxyadenosine + L-methionine + A + S-adenosyl-L-homocysteine + 2 H(+). Its function is as follows. Catalyzes the methylthiolation of N6-(dimethylallyl)adenosine (i(6)A), leading to the formation of 2-methylthio-N6-(dimethylallyl)adenosine (ms(2)i(6)A) at position 37 in tRNAs that read codons beginning with uridine. The sequence is that of tRNA-2-methylthio-N(6)-dimethylallyladenosine synthase from Geobacter sulfurreducens (strain ATCC 51573 / DSM 12127 / PCA).